The sequence spans 635 residues: Threonine--tRNA ligase (635 aa).

The region spanning 1 to 61 (MIAITLPDGS…DRDVALAIIT (61 aa)) is the TGS domain. Residues 242–533 (DHRKLGKSLD…LLENHAGALP (292 aa)) form a catalytic region. Zn(2+) contacts are provided by C333, H384, and H510.

This sequence belongs to the class-II aminoacyl-tRNA synthetase family. In terms of assembly, homodimer. The cofactor is Zn(2+).

The protein resides in the cytoplasm. It catalyses the reaction tRNA(Thr) + L-threonine + ATP = L-threonyl-tRNA(Thr) + AMP + diphosphate + H(+). Its function is as follows. Catalyzes the attachment of threonine to tRNA(Thr) in a two-step reaction: L-threonine is first activated by ATP to form Thr-AMP and then transferred to the acceptor end of tRNA(Thr). Also edits incorrectly charged L-seryl-tRNA(Thr). The protein is Threonine--tRNA ligase of Cupriavidus pinatubonensis (strain JMP 134 / LMG 1197) (Cupriavidus necator (strain JMP 134)).